Consider the following 231-residue polypeptide: GFP-like fluorescent chromoprotein FP538 (231 aa).

At F65 the chain carries Phenylalanine amide; atypical. The segment at residues 66-68 (KYG) is a cross-link (2-tetrahydro-2-pyridyl-5-imidazolinone (Lys-Gly)). Residue Y67 is modified to 2,3-didehydrotyrosine.

Belongs to the GFP family. In terms of assembly, homotetramer. Contains a chromophore consisting of modified amino acid residues. The chromophore is formed by autocatalytic backbone condensation between Xaa-N and Gly-(N+2), and oxidation of Tyr-(N+1) to didehydrotyrosine. In addition, the residue N lysine undergoes cyclization. The alpha-amino nitrogen is replaced by the epsilon-amino nitrogen, the peptide chain is broken, residue N-1 is released as an amide, and a double bond is formed between the alpha-carbon and the nitrogen so that a tetrahydropyridine ring results. Maturation of the chromophore requires nothing other than molecular oxygen. As to expression, tentacle and oral disk.

In terms of biological role, pigment protein that is yellow in color. This is GFP-like fluorescent chromoprotein FP538 from Zoanthus sp. (Green polyp).